The primary structure comprises 81 residues: ATP synthase subunit c, chloroplastic (81 aa).

2 helical membrane-spanning segments follow: residues 7 to 27 (AASV…PGIG) and 57 to 77 (LAFM…LLFA).

This sequence belongs to the ATPase C chain family. F-type ATPases have 2 components, F(1) - the catalytic core - and F(0) - the membrane proton channel. F(1) has five subunits: alpha(3), beta(3), gamma(1), delta(1), epsilon(1). F(0) has four main subunits: a(1), b(1), b'(1) and c(10-14). The alpha and beta chains form an alternating ring which encloses part of the gamma chain. F(1) is attached to F(0) by a central stalk formed by the gamma and epsilon chains, while a peripheral stalk is formed by the delta, b and b' chains.

The protein resides in the plastid. It is found in the chloroplast thylakoid membrane. Functionally, f(1)F(0) ATP synthase produces ATP from ADP in the presence of a proton or sodium gradient. F-type ATPases consist of two structural domains, F(1) containing the extramembraneous catalytic core and F(0) containing the membrane proton channel, linked together by a central stalk and a peripheral stalk. During catalysis, ATP synthesis in the catalytic domain of F(1) is coupled via a rotary mechanism of the central stalk subunits to proton translocation. Key component of the F(0) channel; it plays a direct role in translocation across the membrane. A homomeric c-ring of between 10-14 subunits forms the central stalk rotor element with the F(1) delta and epsilon subunits. This is ATP synthase subunit c, chloroplastic from Pelargonium hortorum (Common geranium).